Here is a 251-residue protein sequence, read N- to C-terminus: Ubiquinone/menaquinone biosynthesis C-methyltransferase UbiE (251 aa).

Residues Thr74, Asp95, and 123–124 (NA) each bind S-adenosyl-L-methionine.

Belongs to the class I-like SAM-binding methyltransferase superfamily. MenG/UbiE family.

It carries out the reaction a 2-demethylmenaquinol + S-adenosyl-L-methionine = a menaquinol + S-adenosyl-L-homocysteine + H(+). The catalysed reaction is a 2-methoxy-6-(all-trans-polyprenyl)benzene-1,4-diol + S-adenosyl-L-methionine = a 5-methoxy-2-methyl-3-(all-trans-polyprenyl)benzene-1,4-diol + S-adenosyl-L-homocysteine + H(+). Its pathway is quinol/quinone metabolism; menaquinone biosynthesis; menaquinol from 1,4-dihydroxy-2-naphthoate: step 2/2. It participates in cofactor biosynthesis; ubiquinone biosynthesis. Methyltransferase required for the conversion of demethylmenaquinol (DMKH2) to menaquinol (MKH2) and the conversion of 2-polyprenyl-6-methoxy-1,4-benzoquinol (DDMQH2) to 2-polyprenyl-3-methyl-6-methoxy-1,4-benzoquinol (DMQH2). This Shewanella sp. (strain ANA-3) protein is Ubiquinone/menaquinone biosynthesis C-methyltransferase UbiE.